The sequence spans 479 residues: MLFPAFSILLISFFSLLSVVTTKTQYWCHGDGVLNNQHTCRFFTIVIDAGSTGTRLHLYKFIHDPAIASHGMPFKVEKEIFQEVKPGLSSFAKSPSSAADSLEPLLQRARKEVPHFMWEKTPITLKATAGLRLLPGDMADDILESVEERIFNSGFFAAFPDAVNVMPGSDEGVYSWFTLNILLETLFTDEPTVGHKPAAHRSVAAFDLGGGSTQLTYWPNNEAVFSEHVGYERDIDFFGHHIRLFTHSFLGNGLIAARLNILQLETDNEIESTHQLITSCMPEGYQLTEWEYALKFWNINGSSSHSFESCYGTTKNFVESSEIMHLRELKGSPVYLFSYFFDRALNSGLVKGNEGGKIELRQFKEAAEIACRREKTEIDDGSHWMPWQCLDLTYIYSLLRDGYQFEDNQPLVLAKKIKGMEVSWGQGLAFATANEFQLTEGAIKTALSSEPNSTVVDQIFDLVYSGTNQVLSYFNIISV.

At 1–7 (MLFPAFS) the chain is on the cytoplasmic side. A helical; Signal-anchor for type II membrane protein transmembrane segment spans residues 8–24 (ILLISFFSLLSVVTTKT). The Lumenal segment spans residues 25-479 (QYWCHGDGVL…VLSYFNIISV (455 aa)). E171 serves as the catalytic Proton acceptor. N300 and N452 each carry an N-linked (GlcNAc...) asparagine glycan.

Belongs to the GDA1/CD39 NTPase family. Requires Ca(2+) as cofactor. The cofactor is Mg(2+). Mn(2+) serves as cofactor.

Its subcellular location is the endomembrane system. It carries out the reaction a ribonucleoside 5'-diphosphate + H2O = a ribonucleoside 5'-phosphate + phosphate + H(+). Hydrolyzes UDP and GDP but not any other nucleoside di-, mono- or triphosphates. May promote reglycosylation reactions involved in glycoproteins folding and quality control in the endoplasmic reticulum. The sequence is that of Nucleoside-diphosphatase uda-1 (uda-1) from Caenorhabditis elegans.